The following is a 320-amino-acid chain: Carbonic anhydrase 6 (320 aa).

A signal peptide spans Met1 to Ala17. One can recognise an Alpha-carbonic anhydrase domain in the interval Ser21 to Phe278. A disulfide bridge links Cys42 with Cys224. The Proton donor/acceptor role is filled by His85. Residues His111, His113, and His138 each coordinate Zn(2+). Substrate is bound at residue Thr220–Thr221. An N-linked (GlcNAc...) asparagine glycan is attached at Asn256.

This sequence belongs to the alpha-carbonic anhydrase family. Zn(2+) serves as cofactor.

It is found in the secreted. It catalyses the reaction hydrogencarbonate + H(+) = CO2 + H2O. In terms of biological role, reversible hydration of carbon dioxide. Its role in saliva is unknown. The sequence is that of Carbonic anhydrase 6 (CA6) from Canis lupus familiaris (Dog).